We begin with the raw amino-acid sequence, 305 residues long: Methionyl-tRNA formyltransferase (305 aa).

111-114 serves as a coordination point for (6S)-5,6,7,8-tetrahydrofolate; that stretch reads SILP.

It belongs to the Fmt family.

The enzyme catalyses L-methionyl-tRNA(fMet) + (6R)-10-formyltetrahydrofolate = N-formyl-L-methionyl-tRNA(fMet) + (6S)-5,6,7,8-tetrahydrofolate + H(+). In terms of biological role, attaches a formyl group to the free amino group of methionyl-tRNA(fMet). The formyl group appears to play a dual role in the initiator identity of N-formylmethionyl-tRNA by promoting its recognition by IF2 and preventing the misappropriation of this tRNA by the elongation apparatus. The chain is Methionyl-tRNA formyltransferase from Wolinella succinogenes (strain ATCC 29543 / DSM 1740 / CCUG 13145 / JCM 31913 / LMG 7466 / NCTC 11488 / FDC 602W) (Vibrio succinogenes).